The following is a 115-amino-acid chain: Anamorsin homolog 1 (115 aa).

Residues 30-115 (VKEATKGEDC…KVKLNLTDDI (86 aa)) form a disordered region. [2Fe-2S] cluster contacts are provided by cysteine 39, cysteine 46, cysteine 49, and cysteine 51. Residues 39–51 (CTTRRRACKNCTC) are fe-S binding site A. Positions 77, 80, 88, and 91 each coordinate [4Fe-4S] cluster. 2 short sequence motifs (cx2C motif) span residues 77-80 (CGNC) and 88-91 (CATC). Residues 77 to 91 (CGNCAKGDAFRCATC) are fe-S binding site B.

The protein belongs to the anamorsin family. As to quaternary structure, monomer. Requires [2Fe-2S] cluster as cofactor. The cofactor is [4Fe-4S] cluster.

The protein resides in the cytoplasm. It is found in the mitochondrion intermembrane space. Functionally, component of the cytosolic iron-sulfur (Fe-S) protein assembly (CIA) machinery. Required for the maturation of extramitochondrial Fe-S proteins. Part of an electron transfer chain functioning in an early step of cytosolic Fe-S biogenesis, facilitating the de novo assembly of a [4Fe-4S] cluster on the cytosolic Fe-S scaffold complex. Electrons are transferred from NADPH via a FAD- and FMN-containing diflavin oxidoreductase. Together with the diflavin oxidoreductase, also required for the assembly of the diferric tyrosyl radical cofactor of ribonucleotide reductase (RNR), probably by providing electrons for reduction during radical cofactor maturation in the catalytic small subunit. The chain is Anamorsin homolog 1 from Trypanosoma cruzi (strain CL Brener).